The chain runs to 464 residues: uncharacterized protein (464 aa).

2 disordered regions span residues Y290–K374 and E445–E464. A compositionally biased stretch (low complexity) spans Q293–Q302. The span at R303–A318 shows a compositional bias: basic residues. The span at D352–Q367 shows a compositional bias: polar residues. Residues E445–Q454 are compositionally biased toward acidic residues.

This is an uncharacterized protein from Macaca fascicularis (Crab-eating macaque).